The primary structure comprises 158 residues: Endoribonuclease YbeY (158 aa).

Zn(2+) is bound by residues histidine 119, histidine 123, and histidine 129.

It belongs to the endoribonuclease YbeY family. Zn(2+) serves as cofactor.

It is found in the cytoplasm. Functionally, single strand-specific metallo-endoribonuclease involved in late-stage 70S ribosome quality control and in maturation of the 3' terminus of the 16S rRNA. The sequence is that of Endoribonuclease YbeY from Acinetobacter baumannii (strain AB307-0294).